Consider the following 382-residue polypeptide: Anhydro-N-acetylmuramic acid kinase (382 aa).

22-29 (GTSMDGVD) lines the ATP pocket.

The protein belongs to the anhydro-N-acetylmuramic acid kinase family.

It carries out the reaction 1,6-anhydro-N-acetyl-beta-muramate + ATP + H2O = N-acetyl-D-muramate 6-phosphate + ADP + H(+). It functions in the pathway amino-sugar metabolism; 1,6-anhydro-N-acetylmuramate degradation. It participates in cell wall biogenesis; peptidoglycan recycling. In terms of biological role, catalyzes the specific phosphorylation of 1,6-anhydro-N-acetylmuramic acid (anhMurNAc) with the simultaneous cleavage of the 1,6-anhydro ring, generating MurNAc-6-P. Is required for the utilization of anhMurNAc either imported from the medium or derived from its own cell wall murein, and thus plays a role in cell wall recycling. The sequence is that of Anhydro-N-acetylmuramic acid kinase from Burkholderia orbicola (strain AU 1054).